The following is a 966-amino-acid chain: Alanine--tRNA ligase (966 aa).

Zn(2+)-binding residues include histidine 646, histidine 650, cysteine 750, and histidine 754. The segment at aspartate 927–alanine 949 is disordered.

It belongs to the class-II aminoacyl-tRNA synthetase family. It depends on Zn(2+) as a cofactor.

It localises to the cytoplasm. The enzyme catalyses tRNA(Ala) + L-alanine + ATP = L-alanyl-tRNA(Ala) + AMP + diphosphate. Catalyzes the attachment of alanine to tRNA(Ala) in a two-step reaction: alanine is first activated by ATP to form Ala-AMP and then transferred to the acceptor end of tRNA(Ala). Also edits incorrectly charged Ser-tRNA(Ala) and Gly-tRNA(Ala) via its editing domain. This Salinibacter ruber (strain DSM 13855 / M31) protein is Alanine--tRNA ligase.